The chain runs to 103 residues: Large ribosomal subunit protein eL14 (103 aa).

It belongs to the eukaryotic ribosomal protein eL14 family.

This is Large ribosomal subunit protein eL14 from Pyrobaculum neutrophilum (strain DSM 2338 / JCM 9278 / NBRC 100436 / V24Sta) (Thermoproteus neutrophilus).